Reading from the N-terminus, the 881-residue chain is Putative cation exchanger C521.04c (881 aa).

Polar residues predominate over residues 1–19; sequence MSQPADINQSESSAETITQ. 2 disordered regions span residues 1–39 and 52–142; these read MSQPADINQSESSAETITQGRRADRPEETPSSSVYEQNL and ADAT…LRSE. The span at 63 to 77 shows a compositional bias: basic and acidic residues; that stretch reads NDRDIYSPREIDQYT. A compositionally biased stretch (polar residues) spans 83 to 95; it reads RTDPSTSTISNAR. Residues 99 to 113 are compositionally biased toward low complexity; it reads RNSVSRLSRSSSNVR. Position 129 is a phosphoserine (serine 129). The next 8 membrane-spanning stretches (helical) occupy residues 200 to 220, 329 to 349, 407 to 427, 438 to 458, 471 to 491, 504 to 524, 537 to 557, and 594 to 614; these read IWLICFGAPLFLVIFICYIFF, LIIAPTLLITSAICMFTIFFV, IYIIYFDMLALIIPTIFFGFF, VFLFTASLVSIIPLAYFIGMA, GAFINAFFGSVIEVFLYSVAL, IGSILAGLLLMPGLSMCAGAI, GATSTMLLFAVLGAFAPTMLF, and LPFTYCCSIMLVLAYAIGLWF. The segment at 641–717 is disordered; that stretch reads VGEPVNQDTA…SQNSHGDDAP (77 aa). A compositionally biased stretch (polar residues) spans 646–657; that stretch reads NQDTAGNMSDSS. The segment covering 678–688 has biased composition (low complexity); sequence SSGLSSNGSEN. Transmembrane regions (helical) follow at residues 726 to 746, 762 to 782, 794 to 814, 828 to 848, and 859 to 879; these read IILLSATFLYSLIAEILVEHV, LTLFALVPNTTEFMNAISFAL, SAYALQVCLLQIPCLMGYSLF, LFTMVFPTWDMICVMICVFLL, and YFKGSILVLAYLVSMLGFTFF.

Belongs to the Ca(2+):cation antiporter (CaCA) (TC 2.A.19) family.

The protein localises to the endoplasmic reticulum membrane. In terms of biological role, putative cation exchanger. This Schizosaccharomyces pombe (strain 972 / ATCC 24843) (Fission yeast) protein is Putative cation exchanger C521.04c.